Consider the following 287-residue polypeptide: tRNA selenocysteine 1-associated protein 1 (287 aa).

2 consecutive RRM domains span residues 3-86 (ASLW…YATY) and 96-175 (YSLF…VAIP).

The protein belongs to the RRM TRSPAP family. Component of the tRNA(Sec) complex composed at least of EEFSEC, SECISBP2, SEPHS1, SEPSECS, TRNAU1AP and tRNA(Sec). Found in a complex with tRNA(Sec). Interacts with SEPSECS. Associates with mRNP and/or polysomes. Found in a complex with EEFSEC, SECISBP2, TRNAU1AP and tRNA(Sec).

The protein resides in the nucleus. It is found in the cytoplasm. In terms of biological role, involved in the early steps of selenocysteine biosynthesis and tRNA(Sec) charging to the later steps resulting in the cotranslational incorporation of selenocysteine into selenoproteins. Stabilizes the SECISBP2, EEFSEC and tRNA(Sec) complex. May be involved in the methylation of tRNA(Sec). Enhances efficiency of selenoproteins synthesis. In Homo sapiens (Human), this protein is tRNA selenocysteine 1-associated protein 1 (TRNAU1AP).